A 40-amino-acid chain; its full sequence is Photosystem II reaction center protein L (40 aa).

A helical transmembrane segment spans residues 19–39 (SLFLGLLLVFVLGILFSSYFF).

This sequence belongs to the PsbL family. In terms of assembly, PSII is composed of 1 copy each of membrane proteins PsbA, PsbB, PsbC, PsbD, PsbE, PsbF, PsbH, PsbI, PsbJ, PsbK, PsbL, PsbM, PsbT, PsbX, PsbY, PsbZ, Psb30/Ycf12, peripheral proteins PsbO, CyanoQ (PsbQ), PsbU, PsbV and a large number of cofactors. It forms dimeric complexes.

It is found in the cellular thylakoid membrane. In terms of biological role, one of the components of the core complex of photosystem II (PSII). PSII is a light-driven water:plastoquinone oxidoreductase that uses light energy to abstract electrons from H(2)O, generating O(2) and a proton gradient subsequently used for ATP formation. It consists of a core antenna complex that captures photons, and an electron transfer chain that converts photonic excitation into a charge separation. This subunit is found at the monomer-monomer interface and is required for correct PSII assembly and/or dimerization. This Synechococcus elongatus (strain ATCC 33912 / PCC 7942 / FACHB-805) (Anacystis nidulans R2) protein is Photosystem II reaction center protein L.